Here is a 424-residue protein sequence, read N- to C-terminus: tRNA modification GTPase MnmE (424 aa).

Residues Arg20, Glu77, and Arg117 each contribute to the (6S)-5-formyl-5,6,7,8-tetrahydrofolate site. The TrmE-type G domain occupies 212 to 351 (GVRVVFAGPP…LVRDLRDAAR (140 aa)). Asn222 is a binding site for K(+). Residues 222 to 227 (NAGKST), 241 to 247 (SPIAGTT), and 266 to 269 (DTAG) contribute to the GTP site. Position 226 (Ser226) interacts with Mg(2+). Residues Ser241, Ile243, and Thr246 each contribute to the K(+) site. Thr247 provides a ligand contact to Mg(2+). Lys424 is a (6S)-5-formyl-5,6,7,8-tetrahydrofolate binding site.

It belongs to the TRAFAC class TrmE-Era-EngA-EngB-Septin-like GTPase superfamily. TrmE GTPase family. In terms of assembly, homodimer. Heterotetramer of two MnmE and two MnmG subunits. The cofactor is K(+).

It localises to the cytoplasm. Its function is as follows. Exhibits a very high intrinsic GTPase hydrolysis rate. Involved in the addition of a carboxymethylaminomethyl (cmnm) group at the wobble position (U34) of certain tRNAs, forming tRNA-cmnm(5)s(2)U34. This is tRNA modification GTPase MnmE from Erythrobacter litoralis (strain HTCC2594).